We begin with the raw amino-acid sequence, 85 residues long: Small ribosomal subunit protein uS15 (85 aa).

The protein belongs to the universal ribosomal protein uS15 family. As to quaternary structure, part of the 30S ribosomal subunit. Forms a bridge to the 50S subunit in the 70S ribosome, contacting the 23S rRNA.

In terms of biological role, one of the primary rRNA binding proteins, it binds directly to 16S rRNA where it helps nucleate assembly of the platform of the 30S subunit by binding and bridging several RNA helices of the 16S rRNA. Its function is as follows. Forms an intersubunit bridge (bridge B4) with the 23S rRNA of the 50S subunit in the ribosome. In Fusobacterium nucleatum subsp. nucleatum (strain ATCC 25586 / DSM 15643 / BCRC 10681 / CIP 101130 / JCM 8532 / KCTC 2640 / LMG 13131 / VPI 4355), this protein is Small ribosomal subunit protein uS15.